An 85-amino-acid chain; its full sequence is MEEDRGIADPPLDSLLSRSGSKYGLVIYAAKRARQIDQYYIDLHEGSFYAHVGPLVSVDADDKSLTVAMREIAEDKLDLKSSAAE.

This sequence belongs to the RNA polymerase subunit omega family. As to quaternary structure, the RNAP catalytic core consists of 2 alpha, 1 beta, 1 beta' and 1 omega subunit. When a sigma factor is associated with the core the holoenzyme is formed, which can initiate transcription.

The catalysed reaction is RNA(n) + a ribonucleoside 5'-triphosphate = RNA(n+1) + diphosphate. Its function is as follows. Promotes RNA polymerase assembly. Latches the N- and C-terminal regions of the beta' subunit thereby facilitating its interaction with the beta and alpha subunits. This Tropheryma whipplei (strain TW08/27) (Whipple's bacillus) protein is DNA-directed RNA polymerase subunit omega.